Here is a 195-residue protein sequence, read N- to C-terminus: Pyruvoyl-dependent arginine decarboxylase AaxB (195 aa).

A Pyruvic acid (Ser) modification is found at Ser53.

It belongs to the pyruvoyl-dependent arginine decarboxylase family. In terms of assembly, trimer of an alpha-beta dimer. Pyruvate is required as a cofactor.

It is found in the cytoplasm. It catalyses the reaction L-arginine + H(+) = agmatine + CO2. Functionally, part of the AaxABC system, catalyzes the decarboxylation of L-arginine. The arginine uptake by the bacterium in the macrophage may be a virulence factor against the host innate immune response. The polypeptide is Pyruvoyl-dependent arginine decarboxylase AaxB (aaxB) (Chlamydia trachomatis serovar L2 (strain ATCC VR-902B / DSM 19102 / 434/Bu)).